We begin with the raw amino-acid sequence, 172 residues long: Adenine phosphoribosyltransferase (172 aa).

Belongs to the purine/pyrimidine phosphoribosyltransferase family. Homodimer.

Its subcellular location is the cytoplasm. It catalyses the reaction AMP + diphosphate = 5-phospho-alpha-D-ribose 1-diphosphate + adenine. The protein operates within purine metabolism; AMP biosynthesis via salvage pathway; AMP from adenine: step 1/1. Its function is as follows. Catalyzes a salvage reaction resulting in the formation of AMP, that is energically less costly than de novo synthesis. This chain is Adenine phosphoribosyltransferase, found in Polynucleobacter necessarius subsp. necessarius (strain STIR1).